The chain runs to 270 residues: L-fucose dehydrogenase (270 aa).

12 residues coordinate NAD(+): arginine 19, isoleucine 21, aspartate 40, lysine 41, aspartate 62, valine 63, asparagine 89, tyrosine 154, lysine 158, isoleucine 187, threonine 189, and leucine 191. The active-site Proton acceptor is the tyrosine 154.

Belongs to the short-chain dehydrogenases/reductases (SDR) family. In terms of assembly, homotetramer. Detected in retina.

The protein localises to the cytoplasm. The enzyme catalyses L-fucose + NAD(+) = L-fucono-1,5-lactone + NADH + H(+). It carries out the reaction D-arabinose + NAD(+) = D-arabinono-1,5-lactone + NADH + H(+). The catalysed reaction is L-galactose + NAD(+) = L-galactono-1,5-lactone + NADH + H(+). It functions in the pathway carbohydrate degradation; L-fucose degradation. Catalyzes the NAD(+)-dependent oxidation of L-fucose, yielding L-fucono-1,5-lactone, which rapidly converts spontaneously to L-fucone-1,4-lactone. Can also act on D-arabinose and L-galactose, with lower catalytic efficiency. Does not use NADPH. May be the initial enzyme of the putative L-fucose degradation pathway in mammals. The sequence is that of L-fucose dehydrogenase (HSD17B14) from Bos taurus (Bovine).